Here is a 1583-residue protein sequence, read N- to C-terminus: Transcriptional activator GLI3 (1583 aa).

Residue Met1 is modified to N-acetylmethionine. 2 stretches are compositionally biased toward polar residues: residues Met1–Ala10 and Ile58–Ser78. The segment at Met1–Ser78 is disordered. Position 175 is an omega-N-methylarginine (Arg175). The disordered stretch occupies residues Gln368 to Glu475. Residues Val403–Ser421 show a composition bias toward low complexity. A Glycyl lysine isopeptide (Lys-Gly) (interchain with G-Cter in SUMO2) cross-link involves residue Lys438. Positions Ser448–Gly457 are enriched in polar residues. The span at Val461 to Pro474 shows a compositional bias: basic and acidic residues. Residue Lys462 forms a Glycyl lysine isopeptide (Lys-Gly) (interchain with G-Cter in SUMO2) linkage. C2H2-type zinc fingers lie at residues Thr480–His505, Phe513–His540, His546–His570, Tyr576–His601, and Tyr607–His632. The disordered stretch occupies residues Asp620 to Leu728. Positions His632–Pro648 are enriched in basic and acidic residues. Ser664 bears the Phosphoserine mark. Residues Ser684–Lys699 show a composition bias toward basic and acidic residues. Residues Ser703–Ser726 are compositionally biased toward low complexity. The tract at residues Asp745–Asn845 is mediates interaction with DZIP1. Lys773 is covalently cross-linked (Glycyl lysine isopeptide (Lys-Gly) (interchain with G-Cter in ubiquitin)). Lys779 is covalently cross-linked (Glycyl lysine isopeptide (Lys-Gly) (interchain with G-Cter in SUMO2); alternate). Lys779 is covalently cross-linked (Glycyl lysine isopeptide (Lys-Gly) (interchain with G-Cter in ubiquitin); alternate). Residues Lys784 and Lys800 each participate in a glycyl lysine isopeptide (Lys-Gly) (interchain with G-Cter in ubiquitin) cross-link. Positions Gly809–Pro828 are disordered. Over residues Asn810–Ser820 the composition is skewed to polar residues. Ser849, Ser865, Ser877, Ser907, Ser980, and Ser1006 each carry phosphoserine; by PKA. A compositionally biased stretch (low complexity) spans Arg863–Ser880. Positions Arg863–Leu918 are disordered. The disordered stretch occupies residues Glu1164–Pro1189. The span at Ser1166 to Ser1175 shows a compositional bias: low complexity.

This sequence belongs to the GLI C2H2-type zinc-finger protein family. The phosphorylated form interacts with BTRC. The full-length GLI3 form (GLI3FL) interacts with SUFU and this interaction regulates the formation of either repressor or activator forms of GLI3. Its association with SUFU is regulated by Hh signaling and dissociation of the SUFU-GLI3 interaction requires the presence of the ciliary motor KIF3A. Interacts with KIF7. The activator form of GLI3 (GLI3A) but not the repressor form (GLI3R) can interact with TRPS1. Interacts with ZIC1. Interacts with ZIC3 (via C2H2-type domains 3, 4 and 5); the interaction enhances its transcriptional activity. Interacts with WRD11; the interaction associates EMX1 with GLI3. Interacts with DZIP1; retains GLI3 within the cytoplasm. Post-translationally, phosphorylated by DYRK2 (in vitro). Phosphorylated on multiple sites by protein kinase A (PKA) and phosphorylation by PKA primes further phosphorylation by CK1 and GSK3. Phosphorylation is essential for its proteolytic processing. In terms of processing, transcriptional repressor GLI3R, a C-terminally truncated form, is generated from the full-length GLI3 protein (GLI3FL/GLI3-190) through proteolytic processing. This process requires PKA-primed phosphorylation of GLI3, ubiquitination of GLI3 and the presence of BTRC. GLI3FL is complexed with SUFU in the cytoplasm and is maintained in a neutral state. Without the Hh signal, the SUFU-GLI3 complex is recruited to cilia, leading to the efficient processing of GLI3FL into GLI3R. GLI3R formation leads to its dissociation from SUFU, allowing it to translocate into the nucleus, and repress Hh target genes. When Hh signaling is initiated, SUFU dissociates from GLI3FL and this has two consequences. First, GLI3R production is halted. Second, free GLI3FL translocates to the nucleus, where it is phosphorylated, destabilized, and converted to a transcriptional activator (GLI3A). Phosphorylated in vitro by ULK3.

It is found in the nucleus. The protein resides in the cytoplasm. It localises to the cell projection. Its subcellular location is the cilium. In terms of biological role, has a dual function as a transcriptional activator and a repressor of the sonic hedgehog (Shh) pathway, and plays a role in limb development. The full-length GLI3 form (GLI3FL) after phosphorylation and nuclear translocation, acts as an activator (GLI3A) while GLI3R, its C-terminally truncated form, acts as a repressor. A proper balance between the GLI3 activator and the repressor GLI3R, rather than the repressor gradient itself or the activator/repressor ratio gradient, specifies limb digit number and identity. In concert with TRPS1, plays a role in regulating the size of the zone of distal chondrocytes, in restricting the zone of PTHLH expression in distal cells and in activating chondrocyte proliferation. Binds to the minimal GLI-consensus sequence 5'-GGGTGGTC-3'. The chain is Transcriptional activator GLI3 (Gli3) from Mus musculus (Mouse).